The following is a 617-amino-acid chain: V-type proton ATPase catalytic subunit A (617 aa).

G250 to T257 lines the ATP pocket.

The protein belongs to the ATPase alpha/beta chains family. In terms of assembly, V-ATPase is a heteromultimeric enzyme made up of two complexes: the ATP-hydrolytic V1 complex and the proton translocation V0 complex. The V1 complex consists of three catalytic AB heterodimers that form a heterohexamer, three peripheral stalks each consisting of EG heterodimers, one central rotor including subunits D and F, and the regulatory subunits C and H. The proton translocation complex V0 consists of the proton transport subunit a, a ring of proteolipid subunits c9c'', rotary subunit d, subunits e and f, and the accessory subunits VhaAC45 and ATP6AP2.

The catalysed reaction is ATP + H2O + 4 H(+)(in) = ADP + phosphate + 5 H(+)(out). Its activity is regulated as follows. ATP hydrolysis occurs at the interface between the nucleotide-binding domains of subunits A and B. ATP hydrolysis triggers a conformational change in the subunits D and F, which induces a shift of subunit d. The c-ring is subsequently rotated and results in a continuous proton translocation across the membrane. Catalytic subunit of the V1 complex of vacuolar(H+)-ATPase (V-ATPase), a multisubunit enzyme composed of a peripheral complex (V1) that hydrolyzes ATP and a membrane integral complex (V0) that translocates protons. V-ATPase is responsible for acidifying and maintaining the pH of intracellular compartments and in some cell types, is targeted to the plasma membrane, where it is responsible for acidifying the extracellular environment. The chain is V-type proton ATPase catalytic subunit A (VHAA) from Manduca sexta (Tobacco hawkmoth).